A 373-amino-acid chain; its full sequence is Flagellar P-ring protein (373 aa).

The signal sequence occupies residues 1–27; the sequence is MPSFSPTLLKLAAAALSALLLSGVAAS.

It belongs to the FlgI family. As to quaternary structure, the basal body constitutes a major portion of the flagellar organelle and consists of four rings (L,P,S, and M) mounted on a central rod.

It is found in the periplasm. It localises to the bacterial flagellum basal body. In terms of biological role, assembles around the rod to form the L-ring and probably protects the motor/basal body from shearing forces during rotation. This chain is Flagellar P-ring protein, found in Rhodopseudomonas palustris (strain BisB5).